Reading from the N-terminus, the 362-residue chain is MAPTKRKGSCPGAAPKKPKEPVQVPKLVIKGGIEVLGVKTGVDSFTEVECFLNPQMGNPDEHQKGLSKSLAAEKQFTDDSPDKEQLPCYSVARIPLPNINEDLTCGNILMWEAVTVKTEVIGVTAMLNLHSGTQKTHENGAGKPIQGSNFHFFAVGGEPLELQGVLANYRTKYPAQTVTPKNATVDSQQMNTDHKAVLDKDNAYPVECWVPDPSKNENTRYFGTYTGGENVPPVLHITNTATTVLLDEQGVGPLCKADSLYVSAVDICGLFTNTSGTQQWKGLPRYFKITLRKRSVKNPYPISFLLSDLINRRTQRVDGQPMIGMSSQVEEVRVYEDTEELPGDPDMIRYIDEFGQTTTRMQ.

Residues 1–21 (MAPTKRKGSCPGAAPKKPKEP) form a disordered region. Positions 5-19 (KRKGSCPGAAPKKPK) match the Bipartite nuclear localization signal motif. The interval 302–362 (ISFLLSDLIN…EFGQTTTRMQ (61 aa)) is C-terminal arm. Position 338 is a phosphothreonine; by host (Thr338).

The protein belongs to the polyomaviruses coat protein VP1 family. As to quaternary structure, homomultimer; disulfide-linked. The virus capsid is composed of 72 icosahedral units, each one composed of five disulfide-linked copies of VP1. Interacts with agnoprotein. Interacts with minor capsid proteins VP2 and VP3. Interacts with host HSPA8; this interaction probably participates in virus assembly. Interacts with host SP1; this interaction enhances the efficiency of viral packaging.

Its subcellular location is the virion. It is found in the host nucleus. The protein localises to the host endoplasmic reticulum. Its function is as follows. Forms an icosahedral capsid with a T=7 symmetry and a 40 nm diameter. The capsid is composed of 72 pentamers linked to each other by disulfide bonds and associated with VP2 or VP3 proteins. Binds to N-glycolylneuraminic analog of the ganglioside GM1 on the cell surface to provide virion attachment to target cell. Once attached, the virion is internalized by caveolin-mediated endocytosis and traffics to the endoplasmic reticulum. Inside the endoplasmic reticulum, the protein folding machinery isomerizes VP1 interpentamer disulfide bonds, thereby triggering initial uncoating. Next, the virion uses the endoplasmic reticulum-associated degradation machinery to probably translocate in the cytosol before reaching the nucleus. Nuclear entry of the viral DNA involves the selective exposure and importin recognition of VP2/Vp3 nuclear localization signal. The assembly takes place in the cell nucleus. Encapsulates the genomic DNA and participates in rearranging nucleosomes around the viral DNA. The viral progenies exit the cells by lytic release. The sequence is that of Major capsid protein VP1 from Macaca (macaques).